We begin with the raw amino-acid sequence, 258 residues long: Triosephosphate isomerase (258 aa).

11 to 13 (NWK) serves as a coordination point for substrate. His-101 (electrophile) is an active-site residue. Glu-173 acts as the Proton acceptor in catalysis. Residues Gly-179, Ser-219, and 240-241 (GG) contribute to the substrate site.

Belongs to the triosephosphate isomerase family. In terms of assembly, homodimer.

The protein resides in the cytoplasm. It carries out the reaction D-glyceraldehyde 3-phosphate = dihydroxyacetone phosphate. Its pathway is carbohydrate biosynthesis; gluconeogenesis. It functions in the pathway carbohydrate degradation; glycolysis; D-glyceraldehyde 3-phosphate from glycerone phosphate: step 1/1. Involved in the gluconeogenesis. Catalyzes stereospecifically the conversion of dihydroxyacetone phosphate (DHAP) to D-glyceraldehyde-3-phosphate (G3P). This Streptomyces coelicolor (strain ATCC BAA-471 / A3(2) / M145) protein is Triosephosphate isomerase.